We begin with the raw amino-acid sequence, 189 residues long: Cancer/testis antigen family 45 member A3 (189 aa).

The tract at residues 81 to 119 (KDRMMQKPGSNAPVGGNVTSSFSGDDLECRETASSPKSQ) is disordered.

Belongs to the CT45 family. Testis specific. Expressed in cancer cell lines.

The protein resides in the nucleus. This Homo sapiens (Human) protein is Cancer/testis antigen family 45 member A3.